The chain runs to 397 residues: uncharacterized protein (397 aa).

Disordered stretches follow at residues 159-203 (LNSS…KSTI) and 221-397 (NSVK…KTKN). The segment covering 221–240 (NSVKSSPSKSFVSISSPVQS) has biased composition (low complexity). Polar residues-rich tracts occupy residues 285–309 (TSTL…SSST) and 320–330 (VNPNSTSSVTF). Residues 342 to 371 (CSRCKKSKKGCDRQRPCGRCRDAGLNSEDC) constitute a DNA-binding region (zn(2)-C6 fungal-type). Residues 350–363 (KGCDRQRPCGRCRD) are compositionally biased toward basic and acidic residues. Residues 383–397 (RKPRGRGRGRPKTKN) show a composition bias toward basic residues.

The protein resides in the nucleus. This is an uncharacterized protein from Schizosaccharomyces pombe (strain 972 / ATCC 24843) (Fission yeast).